Reading from the N-terminus, the 359-residue chain is Insulin gene enhancer protein ISL-2 (359 aa).

LIM zinc-binding domains lie at 25-86 (AMCV…RLFG) and 87-149 (IKCA…LLER). Residues 151–191 (AAGSPRSPGPLPGARGLHLPDAGSGRQPALRPHVHKQTEKT) form a disordered region. Residues Ser154 and Ser157 each carry the phosphoserine modification. Positions 191–250 (TTRVRTVLNEKQLHTLRTCYAANPRPDALMKEQLVEMTGLSPRVIRVWFQNKRCKDKKKS) form a DNA-binding region, homeobox. Residues 272–301 (GTPLVAGSPIRHENAVQGSAVEVQTYQPPW) are LIM-binding domain (LID). Phosphoserine is present on Ser279. A compositionally biased stretch (low complexity) spans 326 to 336 (ESGSLGNSSGS). Residues 326 to 359 (ESGSLGNSSGSDVTSLSSQLPDTPNSMVPSPVET) form a disordered region. Polar residues predominate over residues 337–359 (DVTSLSSQLPDTPNSMVPSPVET).

As to quaternary structure, interacts with LHX4.

The protein resides in the nucleus. Its function is as follows. Transcriptional factor that defines subclasses of motoneurons that segregate into columns in the spinal cord and select distinct axon pathways. In Homo sapiens (Human), this protein is Insulin gene enhancer protein ISL-2 (ISL2).